The chain runs to 348 residues: Dihydroorotase (348 aa).

Positions 17 and 19 each coordinate Zn(2+). Substrate contacts are provided by residues 19–21 (HLR) and Asn45. Zn(2+)-binding residues include Lys103, His140, and His178. The residue at position 103 (Lys103) is an N6-carboxylysine. Position 140 (His140) interacts with substrate. Leu223 contacts substrate. Asp251 serves as a coordination point for Zn(2+). The active site involves Asp251. His255 and Ala267 together coordinate substrate.

Belongs to the metallo-dependent hydrolases superfamily. DHOase family. Class II DHOase subfamily. Homodimer. Zn(2+) is required as a cofactor.

The enzyme catalyses (S)-dihydroorotate + H2O = N-carbamoyl-L-aspartate + H(+). It participates in pyrimidine metabolism; UMP biosynthesis via de novo pathway; (S)-dihydroorotate from bicarbonate: step 3/3. Its function is as follows. Catalyzes the reversible cyclization of carbamoyl aspartate to dihydroorotate. The protein is Dihydroorotase of Yersinia enterocolitica serotype O:8 / biotype 1B (strain NCTC 13174 / 8081).